The chain runs to 311 residues: Malate dehydrogenase (311 aa).

NAD(+) contacts are provided by residues 7 to 13 (GAAGGIG) and Asp34. Positions 81 and 87 each coordinate substrate. NAD(+)-binding positions include Asn94 and 117–119 (ITN). The substrate site is built by Asn119 and Arg153. The Proton acceptor role is filled by His177. NAD(+) is bound at residue Met227.

This sequence belongs to the LDH/MDH superfamily. MDH type 1 family. In terms of assembly, homodimer.

The catalysed reaction is (S)-malate + NAD(+) = oxaloacetate + NADH + H(+). Catalyzes the reversible oxidation of malate to oxaloacetate. The sequence is that of Malate dehydrogenase from Yersinia enterocolitica serotype O:8 / biotype 1B (strain NCTC 13174 / 8081).